The sequence spans 439 residues: Probable guanine deaminase (439 aa).

2 residues coordinate Zn(2+): His76 and His78. Residues 78 to 81, 203 to 204, 231 to 234, and Asp321 contribute to the substrate site; these read HYPQ, RF, and HINE. Residues His231 and Asp321 each coordinate Zn(2+).

It belongs to the metallo-dependent hydrolases superfamily. ATZ/TRZ family. Zn(2+) serves as cofactor.

The catalysed reaction is guanine + H2O + H(+) = xanthine + NH4(+). It functions in the pathway purine metabolism; guanine degradation; xanthine from guanine: step 1/1. Catalyzes the hydrolytic deamination of guanine, producing xanthine and ammonia. The chain is Probable guanine deaminase (guaD) from Deinococcus radiodurans (strain ATCC 13939 / DSM 20539 / JCM 16871 / CCUG 27074 / LMG 4051 / NBRC 15346 / NCIMB 9279 / VKM B-1422 / R1).